The following is a 262-amino-acid chain: Acyl-[acyl-carrier-protein]--UDP-N-acetylglucosamine O-acyltransferase (262 aa).

The protein belongs to the transferase hexapeptide repeat family. LpxA subfamily. Homotrimer.

It localises to the cytoplasm. The catalysed reaction is a (3R)-hydroxyacyl-[ACP] + UDP-N-acetyl-alpha-D-glucosamine = a UDP-3-O-[(3R)-3-hydroxyacyl]-N-acetyl-alpha-D-glucosamine + holo-[ACP]. Its pathway is glycolipid biosynthesis; lipid IV(A) biosynthesis; lipid IV(A) from (3R)-3-hydroxytetradecanoyl-[acyl-carrier-protein] and UDP-N-acetyl-alpha-D-glucosamine: step 1/6. Its function is as follows. Involved in the biosynthesis of lipid A, a phosphorylated glycolipid that anchors the lipopolysaccharide to the outer membrane of the cell. This is Acyl-[acyl-carrier-protein]--UDP-N-acetylglucosamine O-acyltransferase from Haemophilus influenzae (strain PittEE).